A 286-amino-acid polypeptide reads, in one-letter code: NAD kinase (286 aa).

Asp-74 (proton acceptor) is an active-site residue. NAD(+)-binding positions include 74-75 (DG), 148-149 (ND), Asp-178, Ala-186, 189-194 (TAYNLS), and Gln-244.

This sequence belongs to the NAD kinase family. Requires a divalent metal cation as cofactor.

It localises to the cytoplasm. The catalysed reaction is NAD(+) + ATP = ADP + NADP(+) + H(+). In terms of biological role, involved in the regulation of the intracellular balance of NAD and NADP, and is a key enzyme in the biosynthesis of NADP. Catalyzes specifically the phosphorylation on 2'-hydroxyl of the adenosine moiety of NAD to yield NADP. This is NAD kinase from Campylobacter jejuni subsp. doylei (strain ATCC BAA-1458 / RM4099 / 269.97).